We begin with the raw amino-acid sequence, 389 residues long: 1-deoxy-D-xylulose 5-phosphate reductoisomerase (389 aa).

6 residues coordinate NADPH: S11, G12, S13, V14, N39, and N122. 1-deoxy-D-xylulose 5-phosphate is bound at residue K123. NADPH is bound at residue E124. D148 lines the Mn(2+) pocket. 4 residues coordinate 1-deoxy-D-xylulose 5-phosphate: S149, E150, S174, and H197. E150 contacts Mn(2+). G203 contributes to the NADPH binding site. The 1-deoxy-D-xylulose 5-phosphate site is built by S210, N215, K216, and E219. E219 is a binding site for Mn(2+).

This sequence belongs to the DXR family. Requires Mg(2+) as cofactor. The cofactor is Mn(2+).

The catalysed reaction is 2-C-methyl-D-erythritol 4-phosphate + NADP(+) = 1-deoxy-D-xylulose 5-phosphate + NADPH + H(+). It participates in isoprenoid biosynthesis; isopentenyl diphosphate biosynthesis via DXP pathway; isopentenyl diphosphate from 1-deoxy-D-xylulose 5-phosphate: step 1/6. In terms of biological role, catalyzes the NADPH-dependent rearrangement and reduction of 1-deoxy-D-xylulose-5-phosphate (DXP) to 2-C-methyl-D-erythritol 4-phosphate (MEP). This chain is 1-deoxy-D-xylulose 5-phosphate reductoisomerase, found in Leptospira interrogans serogroup Icterohaemorrhagiae serovar Lai (strain 56601).